The primary structure comprises 348 residues: N-acetyl-gamma-glutamyl-phosphate reductase (348 aa).

Residue C150 is part of the active site.

This sequence belongs to the NAGSA dehydrogenase family. Type 1 subfamily.

The protein resides in the cytoplasm. It catalyses the reaction N-acetyl-L-glutamate 5-semialdehyde + phosphate + NADP(+) = N-acetyl-L-glutamyl 5-phosphate + NADPH + H(+). Its pathway is amino-acid biosynthesis; L-arginine biosynthesis; N(2)-acetyl-L-ornithine from L-glutamate: step 3/4. In terms of biological role, catalyzes the NADPH-dependent reduction of N-acetyl-5-glutamyl phosphate to yield N-acetyl-L-glutamate 5-semialdehyde. The protein is N-acetyl-gamma-glutamyl-phosphate reductase of Symbiobacterium thermophilum (strain DSM 24528 / JCM 14929 / IAM 14863 / T).